The primary structure comprises 580 residues: Benzoate--CoA ligase, peroxisomal (580 aa).

The short motif at 578–580 (SRL) is the Microbody targeting signal element.

Belongs to the ATP-dependent AMP-binding enzyme family.

The protein localises to the peroxisome. It carries out the reaction benzoate + ATP + CoA = benzoyl-CoA + AMP + diphosphate. Functionally, benzoate--CoA ligase involved in benzoyloxyglucosinolate biosynthesis in seeds. Glucosinolates are secondary metabolites involved in pathogen and insect defense of cruciferous plants. In Arabidopsis thaliana (Mouse-ear cress), this protein is Benzoate--CoA ligase, peroxisomal (AAE20).